The following is a 470-amino-acid chain: 6-phospho-beta-glucosidase BglB (470 aa).

Glu-172 acts as the Proton donor in catalysis. The active-site Nucleophile is the Glu-361.

Belongs to the glycosyl hydrolase 1 family.

The enzyme catalyses 6-phospho-beta-D-glucosyl-(1-&gt;4)-D-glucose + H2O = D-glucose 6-phosphate + D-glucose. Functionally, catalyzes the hydrolysis of phosphorylated beta-glucosides into glucose-6-phosphate (G-6-P) and aglycone. It has a high affinity for phosphorylated aromatic beta-glucosides (p-nitrophenyl-beta-glucoside, phenyl beta-glucoside, arbutin and phosphorylated salicin), and a low affinity for phosphorylated beta-methyl-glucoside. The polypeptide is 6-phospho-beta-glucosidase BglB (bglB) (Escherichia coli (strain K12)).